Here is a 1092-residue protein sequence, read N- to C-terminus: Neural cell adhesion molecule 1-B (1092 aa).

A signal peptide spans 1 to 19 (MLHIKDLIWTLYFIGAAVA). Ig-like C2-type domains are found at residues 20 to 108 (LEVN…GTVN), 113 to 202 (QKLT…KDIQ), 208 to 295 (PPLI…EAIV), 303 to 397 (PKMT…FEVQ), and 400 to 489 (PKIR…FILV). The Extracellular segment spans residues 20 to 705 (LEVNIVPDQG…ATSASTGLGT (686 aa)). 2 disulfide bridges follow: C41–C93 and C136–C186. The N-linked (GlcNAc...) asparagine glycan is linked to N82. Heparin contacts are provided by residues 149–153 (RHKGK) and 158–162 (KKDVR). N219 carries an N-linked (GlcNAc...) asparagine glycan. C232 and C282 form a disulfide bridge. N-linked (GlcNAc...) asparagine glycans are attached at residues N310, N341, N417, N443, and N472. An intrachain disulfide couples C323 to C379. C420 and C473 are oxidised to a cystine. Fibronectin type-III domains follow at residues 493–592 (TPSS…TQPV) and 595–691 (EPSA…TAKP). A helical membrane pass occupies residues 706–723 (GAIVGILIVTFVLLLVVV). The Cytoplasmic portion of the chain corresponds to 724–1092 (DVTCFFLNKC…TQRNVNESKA (369 aa)). Residues 754–784 (KDIEEGKAAFSKDESKEPIVEVRTEEERTPN) show a composition bias toward basic and acidic residues. Disordered stretches follow at residues 754–1005 (KDIE…GGTF) and 1024–1092 (TPAA…ESKA). 2 stretches are compositionally biased toward low complexity: residues 820–832 (TTVT…ITET) and 839–851 (SPTS…TSST). The segment covering 860-871 (DSNTVQSVQATP) has biased composition (polar residues). The span at 917-929 (PSAATSAAEPPTA) shows a compositional bias: low complexity. A compositionally biased stretch (polar residues) spans 968-978 (AQPSTVKSPTE). A compositionally biased stretch (basic and acidic residues) spans 1050–1068 (AKTEKTQVEENSKPEETDV). Residues 1080–1092 (NEATQRNVNESKA) show a composition bias toward polar residues.

In terms of processing, polysialylated by ST8SIA2 and ST8SIA4. Polysialylation modulates cell interactions by confering both attractive and repulsive properties that are highly regulated by ST8SIA2 and ST8SIA4. Polysialylation is formed on a-2,3-linked sialic acid of core glycans.

Its subcellular location is the cell membrane. Functionally, this protein is a cell adhesion molecule involved in neuron-neuron adhesion, neurite fasciculation, outgrowth of neurites, etc. The chain is Neural cell adhesion molecule 1-B from Xenopus laevis (African clawed frog).